The chain runs to 709 residues: Alpha-1,2-mannosyltransferase MNN24 (709 aa).

Residues 1–9 (MFSIPVSSK) are Cytoplasmic-facing. The chain crosses the membrane as a helical span at residues 10-30 (TVRLILVSLLLITLINILAAF). Over 31–709 (QRSTLSSWFP…KNHIEFLEIS (679 aa)) the chain is Extracellular. Asn-317 carries an N-linked (GlcNAc...) asparagine glycan.

This sequence belongs to the MNN1/MNT family.

It localises to the golgi apparatus membrane. It functions in the pathway protein modification; protein glycosylation. Functionally, alpha-1,2-mannosyltransferase required for cell wall integrity. Responsible for addition of the first alpha-1,2-linked mannose to form the branches on the mannan backbone of oligosaccharides. Addition of alpha-1,2-mannose is required for stabilization of the alpha-1,6-mannose backbone and hence regulates mannan fibril length; and is important for both immune recognition and virulence. In Candida albicans (strain SC5314 / ATCC MYA-2876) (Yeast), this protein is Alpha-1,2-mannosyltransferase MNN24 (MNN24).